The primary structure comprises 331 residues: Pantothenate kinase (331 aa).

Residue 109–116 participates in ATP binding; sequence GSVAVGKS.

Belongs to the prokaryotic pantothenate kinase family.

Its subcellular location is the cytoplasm. It carries out the reaction (R)-pantothenate + ATP = (R)-4'-phosphopantothenate + ADP + H(+). Its pathway is cofactor biosynthesis; coenzyme A biosynthesis; CoA from (R)-pantothenate: step 1/5. This chain is Pantothenate kinase, found in Rhizobium johnstonii (strain DSM 114642 / LMG 32736 / 3841) (Rhizobium leguminosarum bv. viciae).